The chain runs to 348 residues: Rhodopsin (348 aa).

Met-1 is subject to N-acetylmethionine. Residues Met-1–Gln-36 are Extracellular-facing. N-linked (GlcNAc...) asparagine glycans are attached at residues Asn-2 and Asn-15. A helical transmembrane segment spans residues Phe-37–Val-61. Over Thr-62–Asn-73 the chain is Cytoplasmic. The chain crosses the membrane as a helical span at residues Tyr-74–Tyr-96. Residues Thr-97–Cys-110 are Extracellular-facing. Cys-110 and Cys-187 form a disulfide bridge. Residues Asn-111–Ile-133 traverse the membrane as a helical segment. The 'Ionic lock' involved in activated form stabilization signature appears at Glu-134–Tyr-136. Topologically, residues Glu-134 to His-152 are cytoplasmic. A helical membrane pass occupies residues Ala-153–Val-173. The Extracellular segment spans residues Gly-174–Ser-202. Zn(2+) is bound at residue Glu-201. Residues Phe-203–Gly-224 traverse the membrane as a helical segment. Residues Gln-225 to Arg-252 are Cytoplasmic-facing. A helical transmembrane segment spans residues Met-253 to Tyr-274. Residues Ile-275–Ile-286 are Extracellular-facing. Gln-279 lines the Zn(2+) pocket. The chain crosses the membrane as a helical span at residues Phe-287–Met-308. Lys-296 bears the N6-(retinylidene)lysine mark. The Cytoplasmic segment spans residues Leu-309–Ala-348. Residues Cys-322 and Cys-323 are each lipidated (S-palmitoyl cysteine). Positions Asp-330–Ala-348 are interaction with SAG. A Phosphoserine modification is found at Ser-334. Thr-336 is subject to Phosphothreonine. Residue Ser-338 is modified to Phosphoserine. Thr-340 and Thr-342 each carry phosphothreonine. Residue Ser-343 is modified to Phosphoserine.

Belongs to the G-protein coupled receptor 1 family. Opsin subfamily. Homodimer. May form a complex composed of RHO, GRK1 and RCVRN in a Ca(2+)-dependent manner; RCVRN prevents the interaction between GRK1 and RHO. Interacts with GRK1. Interacts (phosphorylated form) with SAG. Interacts with GNAT1. Interacts with GNAT3. SAG and G-proteins compete for a common binding site. Interacts with PRCD; the interaction promotes PRCD stability. Forms a complex with ASAP1 and ARF4. Forms a complex with ASAP1, RAB11A, Rabin8/RAB3IP, ARF4 and RAB11FIP3; the complex regulates Golgi-to-cilia rhodopsin/RHO transport in photoreceptors. Post-translationally, phosphorylated on some or all of the serine and threonine residues present in the C-terminal region. Contains one covalently linked retinal chromophore. Upon light absorption, the covalently bound 11-cis-retinal is converted to all-trans-retinal. After hydrolysis of the Schiff base and release of the covalently bound all-trans-retinal, active rhodopsin is regenerated by binding of a fresh molecule of 11-cis-retinal. Rod-shaped photoreceptor cells in the retina (at protein level).

It localises to the membrane. The protein resides in the cell projection. It is found in the cilium. Its subcellular location is the photoreceptor outer segment. In terms of biological role, photoreceptor required for image-forming vision at low light intensity. Required for photoreceptor cell viability after birth. Light-induced isomerization of 11-cis to all-trans retinal triggers a conformational change that activates signaling via G-proteins. Subsequent receptor phosphorylation mediates displacement of the bound G-protein alpha subunit by the arrestin SAG and terminates signaling. This Mus musculus (Mouse) protein is Rhodopsin (Rho).